We begin with the raw amino-acid sequence, 356 residues long: Phosphate acyltransferase (356 aa).

This sequence belongs to the PlsX family. Homodimer. Probably interacts with PlsY.

It localises to the cytoplasm. The catalysed reaction is a fatty acyl-[ACP] + phosphate = an acyl phosphate + holo-[ACP]. The protein operates within lipid metabolism; phospholipid metabolism. Functionally, catalyzes the reversible formation of acyl-phosphate (acyl-PO(4)) from acyl-[acyl-carrier-protein] (acyl-ACP). This enzyme utilizes acyl-ACP as fatty acyl donor, but not acyl-CoA. This Shigella flexneri serotype 5b (strain 8401) protein is Phosphate acyltransferase.